Here is a 453-residue protein sequence, read N- to C-terminus: uncharacterized protein (453 aa).

Disordered stretches follow at residues Gly183–Ser210 and Pro428–Lys453. Residues Thr198 to Arg207 show a composition bias toward basic residues. A compositionally biased stretch (polar residues) spans His433–Lys453.

This is an uncharacterized protein from Saccharomyces cerevisiae (strain ATCC 204508 / S288c) (Baker's yeast).